The sequence spans 153 residues: Regulator of sigma D (153 aa).

Belongs to the Rsd/AlgQ family. Interacts with RpoD.

It localises to the cytoplasm. In terms of biological role, binds RpoD and negatively regulates RpoD-mediated transcription activation by preventing the interaction between the primary sigma factor RpoD with the catalytic core of the RNA polymerase and with promoter DNA. May be involved in replacement of the RNA polymerase sigma subunit from RpoD to RpoS during the transition from exponential growth to the stationary phase. In Pectobacterium atrosepticum (strain SCRI 1043 / ATCC BAA-672) (Erwinia carotovora subsp. atroseptica), this protein is Regulator of sigma D.